A 341-amino-acid polypeptide reads, in one-letter code: S-adenosylmethionine:tRNA ribosyltransferase-isomerase (341 aa).

Belongs to the QueA family. As to quaternary structure, monomer.

The protein resides in the cytoplasm. The catalysed reaction is 7-aminomethyl-7-carbaguanosine(34) in tRNA + S-adenosyl-L-methionine = epoxyqueuosine(34) in tRNA + adenine + L-methionine + 2 H(+). The protein operates within tRNA modification; tRNA-queuosine biosynthesis. Functionally, transfers and isomerizes the ribose moiety from AdoMet to the 7-aminomethyl group of 7-deazaguanine (preQ1-tRNA) to give epoxyqueuosine (oQ-tRNA). This chain is S-adenosylmethionine:tRNA ribosyltransferase-isomerase, found in Clostridium botulinum (strain Alaska E43 / Type E3).